The primary structure comprises 93 residues: Small ribosomal subunit protein uS17 (93 aa).

It belongs to the universal ribosomal protein uS17 family. As to quaternary structure, part of the 30S ribosomal subunit.

One of the primary rRNA binding proteins, it binds specifically to the 5'-end of 16S ribosomal RNA. The polypeptide is Small ribosomal subunit protein uS17 (Corynebacterium aurimucosum (strain ATCC 700975 / DSM 44827 / CIP 107346 / CN-1) (Corynebacterium nigricans)).